The sequence spans 122 residues: MIQQESRLRVADNSGAKELLCIRVLGGSKRRYGNIGDVIVATVKSATPGGVVKKGKVVKAVIVRSKQGVRRNDGSYISFDENAAVIIKDDKTPVGTRIFGPVARELRDNEFMKIVSLAPEVL.

It belongs to the universal ribosomal protein uL14 family. Part of the 50S ribosomal subunit. Forms a cluster with proteins L3 and L19. In the 70S ribosome, L14 and L19 interact and together make contacts with the 16S rRNA in bridges B5 and B8.

In terms of biological role, binds to 23S rRNA. Forms part of two intersubunit bridges in the 70S ribosome. This chain is Large ribosomal subunit protein uL14, found in Clostridioides difficile (strain 630) (Peptoclostridium difficile).